The following is an 81-amino-acid chain: Small cysteine-rich protein 4 (81 aa).

The signal sequence occupies residues Met-1–Ser-23. Residues Gly-24 to Asn-25 constitute a propeptide that is removed on maturation.

The protein belongs to the Cnidaria small cysteine-rich protein (SCRiP) family. beta subfamily. Post-translationally, contains 4 disulfide bonds.

The protein resides in the secreted. It localises to the nematocyst. Functionally, induces neurotoxic symptoms on zebrafish. Has also been claimed to be implied in calcification, but tests on homolog proteins suggest that proteins of this family have a neurotoxic function and not a calcification function. In Orbicella faveolata (Mountainous star coral), this protein is Small cysteine-rich protein 4.